We begin with the raw amino-acid sequence, 211 residues long: MTTLTRQDLNFGQVVADVLSEFLEVAVHLILYVREVYPVGIFQKRKKYNVPVQMSCHPELNQYIQDTLHCVKPLLEKNDVEKVVVVILDKEHRPVEKFVFEITQPPLLSINSDSLLSHVEQLLRAFILKISVCDAVLDHNPPGCTFTVLVHTREAATRNMEKIQVIKDFPWILADEQDVHMHDPRLIPLKTMTSDILKMQLYVEERAHKNS.

The HORMA domain occupies 13–203 (QVVADVLSEF…SDILKMQLYV (191 aa)). The interval 21–155 (EFLEVAVHLI…FTVLVHTREA (135 aa)) is mediates interaction with REV1 and REV3L and homodimerization.

As to quaternary structure, homooligomer. Heterodimer with REV3L. This dimer forms the minimal DNA polymerase zeta complex (Pol-zeta2), with REV3L bearing DNA polymerase catalytic activity, although its activity is very low in this context. Component of the tetrameric Pol-zeta complex (Pol-zeta4), which consists of REV3L, MAD2L2, POLD2 and POLD3; Pol-zeta4 is the fully active form of DNA polymerase zeta. Component of the shieldin complex, consisting of SHLD1, SHLD2, SHLD3 and MAD2L2/REV7. Within the complex, SHLD2 forms a scaffold which interacts with a SHLD3-MAD2L2 subcomplex via its N-terminus, and with SHLD1 via its C-terminus. Interacts with REV1. Interacts with ADAM9. Interacts with CHAMP1. Interacts with FZR1 (in complex with the anaphase promoting complex APC). May interact with CDC20. Interacts with RAN. Interacts with ELK1; the interaction is direct and recruits MAD2L2 to ELK1-specific promoters. May interact with the JNK kinases MAPK8 and/or MAPK9 to stimulate ELK1 phosphorylation and transcriptional activity upon DNA damage. Interacts with TCF7L2; prevents its binding to promoters and negatively modulates its transcriptional activity. Interacts with YY1AP1. Interacts with PRCC; the interaction is direct. Interacts with POGZ. Interacts with ASTE1.

Its subcellular location is the nucleus. It is found in the cytoplasm. The protein resides in the cytoskeleton. It localises to the spindle. Adapter protein able to interact with different proteins and involved in different biological processes. Mediates the interaction between the error-prone DNA polymerase zeta catalytic subunit REV3L and the inserter polymerase REV1, thereby mediating the second polymerase switching in translesion DNA synthesis. Translesion DNA synthesis releases the replication blockade of replicative polymerases, stalled in presence of DNA lesions. Component of the shieldin complex, which plays an important role in repair of DNA double-stranded breaks (DSBs). During G1 and S phase of the cell cycle, the complex functions downstream of TP53BP1 to promote non-homologous end joining (NHEJ) and suppress DNA end resection. Mediates various NHEJ-dependent processes including immunoglobulin class-switch recombination, and fusion of unprotected telomeres. May also regulate another aspect of cellular response to DNA damage through regulation of the JNK-mediated phosphorylation and activation of the transcriptional activator ELK1. Inhibits the FZR1- and probably CDC20-mediated activation of the anaphase promoting complex APC thereby regulating progression through the cell cycle. Regulates TCF7L2-mediated gene transcription and may play a role in epithelial-mesenchymal transdifferentiation. The protein is Mitotic spindle assembly checkpoint protein MAD2B (Mad2l2) of Rattus norvegicus (Rat).